The following is a 597-amino-acid chain: Proteasome-associated ATPase (597 aa).

Positions 1 to 12 (MQHDRPGSRPEE) are enriched in basic and acidic residues. The interval 1–22 (MQHDRPGSRPEEGGEQQIGGDA) is disordered. Positions 21-97 (DAELNSQIRL…REEVDRLAQP (77 aa)) form a coiled coil. Residue 284-289 (GCGKTL) coordinates ATP. The segment at 596–597 (YL) is docks into pockets in the proteasome alpha-ring.

Belongs to the AAA ATPase family. In terms of assembly, homohexamer. Assembles into a hexameric ring structure that caps the 20S proteasome core. Strongly interacts with the prokaryotic ubiquitin-like protein Pup through a hydrophobic interface; the interacting region of ARC lies in its N-terminal coiled-coil domain. There is one Pup binding site per ARC hexamer ring. Upon ATP-binding, the C-terminus of ARC interacts with the alpha-rings of the proteasome core, possibly by binding to the intersubunit pockets.

Its pathway is protein degradation; proteasomal Pup-dependent pathway. In terms of biological role, ATPase which is responsible for recognizing, binding, unfolding and translocation of pupylated proteins into the bacterial 20S proteasome core particle. May be essential for opening the gate of the 20S proteasome via an interaction with its C-terminus, thereby allowing substrate entry and access to the site of proteolysis. Thus, the C-termini of the proteasomal ATPase may function like a 'key in a lock' to induce gate opening and therefore regulate proteolysis. This Saccharopolyspora erythraea (strain ATCC 11635 / DSM 40517 / JCM 4748 / NBRC 13426 / NCIMB 8594 / NRRL 2338) protein is Proteasome-associated ATPase.